The following is a 330-amino-acid chain: GTPase Obg (330 aa).

An Obg domain is found at M1–L159. The OBG-type G domain occupies S160–K327. Residues G166–S173, F191–V195, D212–G215, N279–D282, and S308–Y310 each bind GTP. Residues S173 and T193 each coordinate Mg(2+).

This sequence belongs to the TRAFAC class OBG-HflX-like GTPase superfamily. OBG GTPase family. In terms of assembly, monomer. The cofactor is Mg(2+).

The protein localises to the cytoplasm. In terms of biological role, an essential GTPase which binds GTP, GDP and possibly (p)ppGpp with moderate affinity, with high nucleotide exchange rates and a fairly low GTP hydrolysis rate. Plays a role in control of the cell cycle, stress response, ribosome biogenesis and in those bacteria that undergo differentiation, in morphogenesis control. This Rickettsia typhi (strain ATCC VR-144 / Wilmington) protein is GTPase Obg.